A 626-amino-acid polypeptide reads, in one-letter code: tRNA uridine 5-carboxymethylaminomethyl modification enzyme MnmG (626 aa).

Position 13–18 (13–18 (GGGHAG)) interacts with FAD. 273-287 (GPRYCPSIEDKIHRF) is a binding site for NAD(+).

It belongs to the MnmG family. As to quaternary structure, homodimer. Heterotetramer of two MnmE and two MnmG subunits. The cofactor is FAD.

It is found in the cytoplasm. Its function is as follows. NAD-binding protein involved in the addition of a carboxymethylaminomethyl (cmnm) group at the wobble position (U34) of certain tRNAs, forming tRNA-cmnm(5)s(2)U34. In Acinetobacter baumannii (strain ATCC 17978 / DSM 105126 / CIP 53.77 / LMG 1025 / NCDC KC755 / 5377), this protein is tRNA uridine 5-carboxymethylaminomethyl modification enzyme MnmG.